The sequence spans 682 residues: Potassium-transporting ATPase ATP-binding subunit (682 aa).

The next 4 helical transmembrane spans lie at proline 34–alanine 54, alanine 62–alanine 82, isoleucine 219–leucine 239, and valine 254–isoleucine 274. Aspartate 307 serves as the catalytic 4-aspartylphosphate intermediate. Residues aspartate 344, glutamate 348, phenylalanine 377 to serine 384, and lysine 395 each bind ATP. 2 residues coordinate Mg(2+): aspartate 518 and aspartate 522. A run of 3 helical transmembrane segments spans residues phenylalanine 588 to methionine 608, alanine 616 to leucine 636, and leucine 662 to valine 682.

This sequence belongs to the cation transport ATPase (P-type) (TC 3.A.3) family. Type IA subfamily. In terms of assembly, the system is composed of three essential subunits: KdpA, KdpB and KdpC.

Its subcellular location is the cell inner membrane. The catalysed reaction is K(+)(out) + ATP + H2O = K(+)(in) + ADP + phosphate + H(+). Functionally, part of the high-affinity ATP-driven potassium transport (or Kdp) system, which catalyzes the hydrolysis of ATP coupled with the electrogenic transport of potassium into the cytoplasm. This subunit is responsible for energy coupling to the transport system and for the release of the potassium ions to the cytoplasm. This Enterobacter sp. (strain 638) protein is Potassium-transporting ATPase ATP-binding subunit.